A 222-amino-acid polypeptide reads, in one-letter code: N-(5'-phosphoribosyl)anthranilate isomerase (222 aa).

It belongs to the TrpF family.

It carries out the reaction N-(5-phospho-beta-D-ribosyl)anthranilate = 1-(2-carboxyphenylamino)-1-deoxy-D-ribulose 5-phosphate. It participates in amino-acid biosynthesis; L-tryptophan biosynthesis; L-tryptophan from chorismate: step 3/5. The protein is N-(5'-phosphoribosyl)anthranilate isomerase of Xanthomonas euvesicatoria pv. vesicatoria (strain 85-10) (Xanthomonas campestris pv. vesicatoria).